The following is a 310-amino-acid chain: Aspartate carbamoyltransferase catalytic subunit (310 aa).

The carbamoyl phosphate site is built by Arg58 and Thr59. Residue Lys87 participates in L-aspartate binding. 3 residues coordinate carbamoyl phosphate: Arg108, His136, and Gln139. L-aspartate is bound by residues Arg169 and Arg229. 2 residues coordinate carbamoyl phosphate: Leu268 and Pro269.

This sequence belongs to the aspartate/ornithine carbamoyltransferase superfamily. ATCase family. In terms of assembly, heterododecamer (2C3:3R2) of six catalytic PyrB chains organized as two trimers (C3), and six regulatory PyrI chains organized as three dimers (R2).

The catalysed reaction is carbamoyl phosphate + L-aspartate = N-carbamoyl-L-aspartate + phosphate + H(+). The protein operates within pyrimidine metabolism; UMP biosynthesis via de novo pathway; (S)-dihydroorotate from bicarbonate: step 2/3. In terms of biological role, catalyzes the condensation of carbamoyl phosphate and aspartate to form carbamoyl aspartate and inorganic phosphate, the committed step in the de novo pyrimidine nucleotide biosynthesis pathway. The polypeptide is Aspartate carbamoyltransferase catalytic subunit (Leptospira biflexa serovar Patoc (strain Patoc 1 / Ames)).